A 615-amino-acid chain; its full sequence is Sodium-dependent neutral amino acid transporter B(0)AT3 (615 aa).

Residues 1 to 26 (MAQASGMDPLVDIEDERPKWDNKLQY) lie on the Cytoplasmic side of the membrane. A helical membrane pass occupies residues 27-47 (LLSCIGFAVGLGNIWRFPYLC). Over 48-52 (QTHGG) the chain is Extracellular. Residues 53 to 73 (GAFLIPYFIALVFEGIPLFYI) form a helical membrane-spanning segment. The Cytoplasmic segment spans residues 74-105 (ELAIGQRLRRGSIGVWKTISPYLGGVGLGCFS). A helical membrane pass occupies residues 106 to 126 (VSFLVSLYYNTVLLWVLWFFL). The Extracellular segment spans residues 127–177 (NSFQHPLPWSTCPLDLNRTGFVQECQSSGTVSYFWYRQTLNITSDISNTGT). N-linked (GlcNAc...) asparagine glycosylation is found at Asn143 and Asn167. A helical membrane pass occupies residues 178 to 198 (IQWKLFLCLVACWSTVYLCVI). Topologically, residues 199-206 (RGIESTGK) are cytoplasmic. A helical transmembrane segment spans residues 207–227 (VIYFTALFPYLVLTIFLIRGL). The Extracellular segment spans residues 228 to 255 (TLPGATEGLIYLFTPNMKTLQNPRVWLD). Residues 256–276 (AATQIFFSLSLAFGGHIAFAS) form a helical membrane-spanning segment. Residues 277–288 (YNPPRNNCEKDA) lie on the Cytoplasmic side of the membrane. The chain crosses the membrane as a helical span at residues 289 to 309 (VIIALVNSMTSLYASIAIFSV). The Extracellular portion of the chain corresponds to 310-397 (MGFKASNDYG…FTEAVLHMPG (88 aa)). Asn353 is a glycosylation site (N-linked (GlcNAc...) asparagine). The helical transmembrane segment at 398-418 (ASVWSVLFFGMLFTLGLSSMF) threads the bilayer. At 419-441 (GNMEGVITPLLDMGILPKGIPKE) the chain is on the cytoplasmic side. A helical membrane pass occupies residues 442–462 (VMTGVICFACFLSAICFTLQS). The Extracellular portion of the chain corresponds to 463 to 472 (GGYWLEIFDS). A helical membrane pass occupies residues 473–493 (FAASLNLIIFAFMEVVGVIHI). The Cytoplasmic segment spans residues 494–520 (YGMKRFCDDIEWMTGRRPGLYWQVTWR). The helical transmembrane segment at 521-541 (VVSPMLLFGIFLSYIVLLIQT) threads the bilayer. The Extracellular segment spans residues 542-570 (PPSYKAWNPQYEHFPSREEKFYPGWVQVT). A helical transmembrane segment spans residues 571–591 (CVLLSFLPSLWVPGVALAQLL). Residues 592–615 (SQYKQRWKATHLESGLKLQESRGC) lie on the Cytoplasmic side of the membrane.

Belongs to the sodium:neurotransmitter symporter (SNF) (TC 2.A.22) family. SLC6A18 subfamily. As to quaternary structure, interacts with CLTRN; this interaction regulates the trafficking of SLC6A18 to the cell membrane and its activity. In terms of tissue distribution, expressed predominantly in kidney.

The protein localises to the apical cell membrane. The protein resides in the cell membrane. It carries out the reaction L-alanine(out) + chloride(out) + 2 Na(+)(out) = L-alanine(in) + chloride(in) + 2 Na(+)(in). The enzyme catalyses glycine(out) + chloride(out) + 2 Na(+)(out) = glycine(in) + chloride(in) + 2 Na(+)(in). The catalysed reaction is L-methionine(out) + chloride(out) + 2 Na(+)(out) = L-methionine(in) + chloride(in) + 2 Na(+)(in). It catalyses the reaction L-valine(out) + chloride(out) + 2 Na(+)(out) = L-valine(in) + chloride(in) + 2 Na(+)(in). It carries out the reaction L-isoleucine(out) + chloride(out) + 2 Na(+)(out) = L-isoleucine(in) + chloride(in) + 2 Na(+)(in). The enzyme catalyses L-serine(out) + chloride(out) + 2 Na(+)(out) = L-serine(in) + chloride(in) + 2 Na(+)(in). The catalysed reaction is L-leucine(out) + chloride(out) + 2 Na(+)(out) = L-leucine(in) + chloride(in) + 2 Na(+)(in). Its function is as follows. Symporter that transports one amino acid molecule together with two sodium and one chloride ions in kidneys and plays a role in the neutral amino acids reabsorption. Preferentially transports neutral amino acids such as L-glycine and L-alanine but also other neutral amino acids. Required CLTRN for cell surface expression and for its amino acid transporter activity. The transport mechanism is pH-independent. This is Sodium-dependent neutral amino acid transporter B(0)AT3 from Mus musculus (Mouse).